We begin with the raw amino-acid sequence, 384 residues long: Carbamoyl phosphate synthase small chain (384 aa).

Positions 1 to 192 (MMKRIPAILV…LTDNIRVHRV (192 aa)) are CPSase. Residues Ser51, Gly244, and Gly246 each contribute to the L-glutamine site. Positions 196 to 382 (KVIVIDFGVK…IEIMTKSKNK (187 aa)) constitute a Glutamine amidotransferase type-1 domain. The active-site Nucleophile is Cys272. L-glutamine-binding residues include Met273, Gln276, Asn312, Gly314, and Phe315. Residues His355 and Glu357 contribute to the active site.

Belongs to the CarA family. In terms of assembly, composed of two chains; the small (or glutamine) chain promotes the hydrolysis of glutamine to ammonia, which is used by the large (or ammonia) chain to synthesize carbamoyl phosphate. Tetramer of heterodimers (alpha,beta)4.

It localises to the plastid. The protein resides in the chloroplast. The enzyme catalyses hydrogencarbonate + L-glutamine + 2 ATP + H2O = carbamoyl phosphate + L-glutamate + 2 ADP + phosphate + 2 H(+). It carries out the reaction L-glutamine + H2O = L-glutamate + NH4(+). It participates in amino-acid biosynthesis; L-arginine biosynthesis; carbamoyl phosphate from bicarbonate: step 1/1. Its pathway is pyrimidine metabolism; UMP biosynthesis via de novo pathway; (S)-dihydroorotate from bicarbonate: step 1/3. Its function is as follows. Small subunit of the glutamine-dependent carbamoyl phosphate synthetase (CPSase). CPSase catalyzes the formation of carbamoyl phosphate from the ammonia moiety of glutamine, carbonate, and phosphate donated by ATP, constituting the first step of 2 biosynthetic pathways, one leading to arginine and/or urea and the other to pyrimidine nucleotides. The small subunit (glutamine amidotransferase) binds and cleaves glutamine to supply the large subunit with the substrate ammonia. The chain is Carbamoyl phosphate synthase small chain from Pyropia yezoensis (Susabi-nori).